We begin with the raw amino-acid sequence, 1217 residues long: Rho family-interacting cell polarization regulator 1 (1217 aa).

Ser-22 is modified (phosphoserine). The stretch at 83-112 forms a coiled coil; it reads RGLTAYLEVHQQEQEKLQRQIKESKRNSRL. Phosphoserine is present on residues Ser-345 and Ser-347. Phosphothreonine is present on Thr-351. The interval 371 to 413 is disordered; that stretch reads NGTAWSLSSESSDDSSSPQLSGTARYSSTPKPLVQQPEPLPVQ. 2 stretches are compositionally biased toward low complexity: residues 376-391 and 400-413; these read SLSS…PQLS and PKPL…LPVQ. Phosphoserine occurs at positions 452 and 455. Residues 565-762 are disordered; the sequence is TSTTVGSTHK…SPSSIVPEPQ (198 aa). A compositionally biased stretch (polar residues) spans 579–594; it reads PLTSTGSIPSVTDSIQ. Residues 595-649 show a composition bias toward low complexity; sequence TTTSPTHTTPSPTHTTVSPTHSTPSPTHTTVSPSNAALSPSNATPSLSHSTTSPT. Positions 650–661 are enriched in polar residues; the sequence is QKATMSTHTTSA. Over residues 664 to 695 the composition is skewed to low complexity; it reads PVQTTTSPISTTVSPSPSVDTAIISSSSAVPS. Over residues 720–729 the composition is skewed to polar residues; sequence ACTSSPSLAS. At Ser-742 the chain carries Phosphoserine. The stretch at 786–828 forms a coiled coil; the sequence is RRLEEALRTLMAALDDYRGQFPELQGLEQEVTRLESLLMQRQG. Residues 850 to 874 are disordered; it reads FLNDDEDEDNDSPGDRPTSSPEVVA. Over residues 852–861 the composition is skewed to acidic residues; the sequence is NDDEDEDNDS. Residues Ser-868 and Ser-869 each carry the phosphoserine modification.

This sequence belongs to the RIPOR family. As to quaternary structure, interacts (via N-terminus) with RHOA (GTP-bound form); this interaction links active RHOA to STK24 and STK26 kinases. Interacts with RHOB. Interacts with RHOC. Interacts (via C-terminus) with PDCD10; this interaction occurs in a Rho-independent manner. Interacts (via C-terminus) with STK24; this interaction occurs in a PDCD10-dependent and Rho-independent manner. Interacts (via C-terminus) with STK26; this interaction occurs in a PDCD10-dependent and Rho-independent manner. Interacts (via N-terminus) with 14-3-3 proteins; these interactions occur in a Rho-dependent manner.

The protein localises to the cytoplasm. It is found in the golgi apparatus. Its function is as follows. Downstream effector protein for Rho-type small GTPases that plays a role in cell polarity and directional migration. Acts as an adapter protein, linking active Rho proteins to STK24 and STK26 kinases, and hence positively regulates Golgi reorientation in polarized cell migration upon Rho activation. Involved in the subcellular relocation of STK26 from the Golgi to cytoplasm punctae in a Rho- and PDCD10-dependent manner upon serum stimulation. The protein is Rho family-interacting cell polarization regulator 1 of Rattus norvegicus (Rat).